We begin with the raw amino-acid sequence, 259 residues long: Hemin import ATP-binding protein HmuV (259 aa).

In terms of domain architecture, ABC transporter spans 2–238; it reads IEARDLNVSI…ALLSEVFDCQ (237 aa). 34–41 provides a ligand contact to ATP; that stretch reads GPNGSGKS.

It belongs to the ABC transporter superfamily. Heme (hemin) importer (TC 3.A.1.14.5) family. As to quaternary structure, the complex is composed of two ATP-binding proteins (HmuV), two transmembrane proteins (HmuU) and a solute-binding protein (HmuT).

It is found in the cell inner membrane. Functionally, part of the ABC transporter complex HmuTUV involved in hemin import. Responsible for energy coupling to the transport system. The sequence is that of Hemin import ATP-binding protein HmuV from Chelativorans sp. (strain BNC1).